Consider the following 146-residue polypeptide: Small ribosomal subunit protein uS15 (146 aa).

The protein belongs to the universal ribosomal protein uS15 family. Part of the 30S ribosomal subunit.

The protein is Small ribosomal subunit protein uS15 of Picrophilus torridus (strain ATCC 700027 / DSM 9790 / JCM 10055 / NBRC 100828 / KAW 2/3).